The primary structure comprises 117 residues: 5-hydroxyisourate hydrolase (117 aa).

Residues histidine 7, arginine 45, and tyrosine 114 each coordinate substrate.

It belongs to the transthyretin family. 5-hydroxyisourate hydrolase subfamily. Homotetramer.

The enzyme catalyses 5-hydroxyisourate + H2O = 5-hydroxy-2-oxo-4-ureido-2,5-dihydro-1H-imidazole-5-carboxylate + H(+). Its function is as follows. Catalyzes the hydrolysis of 5-hydroxyisourate (HIU) to 2-oxo-4-hydroxy-4-carboxy-5-ureidoimidazoline (OHCU). This Ralstonia nicotianae (strain ATCC BAA-1114 / GMI1000) (Ralstonia solanacearum) protein is 5-hydroxyisourate hydrolase.